The chain runs to 275 residues: Undecaprenyl-diphosphatase 2 (275 aa).

7 helical membrane passes run 48-68, 90-110, 117-137, 154-174, 195-215, 223-243, and 254-274; these read NAYV…ALLF, GLTL…GLLF, IFHV…MIAA, ISYK…WPGF, ANFT…LSLI, ISLL…SLVV, and IKLV…LFLF.

It belongs to the UppP family.

It localises to the cell membrane. It catalyses the reaction di-trans,octa-cis-undecaprenyl diphosphate + H2O = di-trans,octa-cis-undecaprenyl phosphate + phosphate + H(+). In terms of biological role, catalyzes the dephosphorylation of undecaprenyl diphosphate (UPP). Confers resistance to bacitracin. The chain is Undecaprenyl-diphosphatase 2 from Shouchella clausii (strain KSM-K16) (Alkalihalobacillus clausii).